The following is a 156-amino-acid chain: SsrA-binding protein (156 aa).

This sequence belongs to the SmpB family.

It is found in the cytoplasm. In terms of biological role, required for rescue of stalled ribosomes mediated by trans-translation. Binds to transfer-messenger RNA (tmRNA), required for stable association of tmRNA with ribosomes. tmRNA and SmpB together mimic tRNA shape, replacing the anticodon stem-loop with SmpB. tmRNA is encoded by the ssrA gene; the 2 termini fold to resemble tRNA(Ala) and it encodes a 'tag peptide', a short internal open reading frame. During trans-translation Ala-aminoacylated tmRNA acts like a tRNA, entering the A-site of stalled ribosomes, displacing the stalled mRNA. The ribosome then switches to translate the ORF on the tmRNA; the nascent peptide is terminated with the 'tag peptide' encoded by the tmRNA and targeted for degradation. The ribosome is freed to recommence translation, which seems to be the essential function of trans-translation. In Renibacterium salmoninarum (strain ATCC 33209 / DSM 20767 / JCM 11484 / NBRC 15589 / NCIMB 2235), this protein is SsrA-binding protein.